The following is a 201-amino-acid chain: Ubiquitin-conjugating enzyme E2 E2 (201 aa).

Residues 1-10 (MSTEAQRVDD) are compositionally biased toward basic and acidic residues. The segment at 1-55 (MSTEAQRVDDSPSTSGGSSDGDQRESVQQEPDREQVQPKKKEGKISSKTAAKLST) is disordered. Ser2 bears the N-acetylserine mark. A phosphoserine mark is found at Ser11, Ser15, Ser18, and Ser19. Over residues 21–45 (GDQRESVQQEPDREQVQPKKKEGKI) the composition is skewed to basic and acidic residues. Positions 46-55 (SSKTAAKLST) are enriched in low complexity. Positions 55 to 201 (TSAKRIQKEL…ARQWTKRYAT (147 aa)) constitute a UBC core domain. Cys139 acts as the Glycyl thioester intermediate in catalysis.

This sequence belongs to the ubiquitin-conjugating enzyme family. Autoubiquitinated.

The enzyme catalyses S-ubiquitinyl-[E1 ubiquitin-activating enzyme]-L-cysteine + [E2 ubiquitin-conjugating enzyme]-L-cysteine = [E1 ubiquitin-activating enzyme]-L-cysteine + S-ubiquitinyl-[E2 ubiquitin-conjugating enzyme]-L-cysteine.. It participates in protein modification; protein ubiquitination. In terms of biological role, accepts ubiquitin from the E1 complex and catalyzes its covalent attachment to other proteins. In vitro catalyzes 'Lys-11'- and 'Lys-48'-, as well as 'Lys-63'-linked polyubiquitination. Catalyzes the ISGylation of influenza A virus NS1 protein. The chain is Ubiquitin-conjugating enzyme E2 E2 (Ube2e2) from Mus musculus (Mouse).